Here is a 152-residue protein sequence, read N- to C-terminus: HTH-type transcriptional regulator SlrR (152 aa).

Residues isoleucine 6–leucine 61 enclose the HTH cro/C1-type domain. Positions isoleucine 17–arginine 36 form a DNA-binding region, H-T-H motif. Residues tyrosine 113–glycine 151 enclose the Sin domain.

As to quaternary structure, component of the SlrR/SlrA complex.

Represses sigma(D)-dependent flagellar genes and activate the eps and yqxM operons. Repressor activity is regulated by SlrA. Controls the initiation of biofilm formation. The protein is HTH-type transcriptional regulator SlrR (slrR) of Bacillus subtilis (strain 168).